The primary structure comprises 129 residues: uncharacterized protein (129 aa).

Residues 1-13 are compositionally biased toward low complexity; sequence MSDVAETVVAQEP. Residues 1-129 form a disordered region; it reads MSDVAETVVA…SGDAPAVAAE (129 aa). Basic and acidic residues predominate over residues 34-94; sequence IDEKTSEQNG…KRVSSAHEEA (61 aa). Over residues 117–129 the composition is skewed to low complexity; the sequence is VAASGDAPAVAAE.

This is an uncharacterized protein from Caenorhabditis elegans.